The chain runs to 500 residues: Cobyric acid synthase (500 aa).

Positions 255 to 444 (AIDIAVIRCP…MHDLFHNDAF (190 aa)) constitute a GATase cobBQ-type domain. The active-site Nucleophile is the Cys337. His436 is a catalytic residue.

The protein belongs to the CobB/CobQ family. CobQ subfamily.

Its pathway is cofactor biosynthesis; adenosylcobalamin biosynthesis. Its function is as follows. Catalyzes amidations at positions B, D, E, and G on adenosylcobyrinic A,C-diamide. NH(2) groups are provided by glutamine, and one molecule of ATP is hydrogenolyzed for each amidation. The sequence is that of Cobyric acid synthase from Geobacillus thermodenitrificans (strain NG80-2).